A 613-amino-acid polypeptide reads, in one-letter code: ATP-dependent RNA helicase DeaD (613 aa).

Positions 5-33 match the Q motif motif; sequence ITFNDLGLPEFILKAVSDLGFETPSPIQQ. Positions 36–207 constitute a Helicase ATP-binding domain; sequence IPHLLNGNDV…KRFMNDPQEV (172 aa). 49-56 is a binding site for ATP; the sequence is AQTGSGKT. The short motif at 155–158 is the DEAD box element; it reads DEAD. The Helicase C-terminal domain maps to 231-378; sequence KNEALLRFLE…EVELPNHLVL (148 aa). Disordered regions lie at residues 434 to 476 and 552 to 613; these read ILPP…PQPM and AVKS…RSSF. Basic and acidic residues-rich tracts occupy residues 440–469 and 556–613; these read PMEK…ERKG and DNSR…RSSF.

Belongs to the DEAD box helicase family. DeaD/CsdA subfamily.

It is found in the cytoplasm. It catalyses the reaction ATP + H2O = ADP + phosphate + H(+). Functionally, DEAD-box RNA helicase involved in various cellular processes at low temperature, including ribosome biogenesis, mRNA degradation and translation initiation. This Haemophilus influenzae (strain ATCC 51907 / DSM 11121 / KW20 / Rd) protein is ATP-dependent RNA helicase DeaD.